The chain runs to 531 residues: CTP synthase (531 aa).

An amidoligase domain region spans residues 1–265; it reads MAKYIFITGG…DRIITERLNL (265 aa). S13 is a binding site for CTP. S13 contributes to the UTP binding site. 14 to 19 is a binding site for ATP; sequence SLGKGI. Y54 contributes to the L-glutamine binding site. D71 provides a ligand contact to ATP. D71 and E139 together coordinate Mg(2+). CTP contacts are provided by residues 146–148, 186–191, and K222; these read DIE and KTKPTQ. Residues 186 to 191 and K222 each bind UTP; that span reads KTKPTQ. The region spanning 290 to 529 is the Glutamine amidotransferase type-1 domain; it reads NVALVGKYVE…IRACLEYKRK (240 aa). G349 provides a ligand contact to L-glutamine. C376 acts as the Nucleophile; for glutamine hydrolysis in catalysis. Residues 377–380, E400, and R457 each bind L-glutamine; that span reads LGMQ. Catalysis depends on residues H502 and E504.

It belongs to the CTP synthase family. In terms of assembly, homotetramer.

It catalyses the reaction UTP + L-glutamine + ATP + H2O = CTP + L-glutamate + ADP + phosphate + 2 H(+). It carries out the reaction L-glutamine + H2O = L-glutamate + NH4(+). The enzyme catalyses UTP + NH4(+) + ATP = CTP + ADP + phosphate + 2 H(+). Its pathway is pyrimidine metabolism; CTP biosynthesis via de novo pathway; CTP from UDP: step 2/2. Its activity is regulated as follows. Allosterically activated by GTP, when glutamine is the substrate; GTP has no effect on the reaction when ammonia is the substrate. The allosteric effector GTP functions by stabilizing the protein conformation that binds the tetrahedral intermediate(s) formed during glutamine hydrolysis. Inhibited by the product CTP, via allosteric rather than competitive inhibition. Catalyzes the ATP-dependent amination of UTP to CTP with either L-glutamine or ammonia as the source of nitrogen. Regulates intracellular CTP levels through interactions with the four ribonucleotide triphosphates. This Aquifex aeolicus (strain VF5) protein is CTP synthase.